Consider the following 273-residue polypeptide: 2-dehydro-3-deoxyphosphooctonate aldolase (273 aa).

Belongs to the KdsA family.

It localises to the cytoplasm. The catalysed reaction is D-arabinose 5-phosphate + phosphoenolpyruvate + H2O = 3-deoxy-alpha-D-manno-2-octulosonate-8-phosphate + phosphate. The protein operates within carbohydrate biosynthesis; 3-deoxy-D-manno-octulosonate biosynthesis; 3-deoxy-D-manno-octulosonate from D-ribulose 5-phosphate: step 2/3. Its pathway is bacterial outer membrane biogenesis; lipopolysaccharide biosynthesis. The sequence is that of 2-dehydro-3-deoxyphosphooctonate aldolase from Cyanothece sp. (strain PCC 7425 / ATCC 29141).